A 319-amino-acid chain; its full sequence is Acetyl-coenzyme A carboxylase carboxyl transferase subunit alpha (319 aa).

Residues 39–293 enclose the CoA carboxyltransferase C-terminal domain; that stretch reads RLQKKSNDLT…KAVLEKQLHE (255 aa).

Belongs to the AccA family. In terms of assembly, acetyl-CoA carboxylase is a heterohexamer composed of biotin carboxyl carrier protein (AccB), biotin carboxylase (AccC) and two subunits each of ACCase subunit alpha (AccA) and ACCase subunit beta (AccD).

The protein resides in the cytoplasm. The catalysed reaction is N(6)-carboxybiotinyl-L-lysyl-[protein] + acetyl-CoA = N(6)-biotinyl-L-lysyl-[protein] + malonyl-CoA. The protein operates within lipid metabolism; malonyl-CoA biosynthesis; malonyl-CoA from acetyl-CoA: step 1/1. Component of the acetyl coenzyme A carboxylase (ACC) complex. First, biotin carboxylase catalyzes the carboxylation of biotin on its carrier protein (BCCP) and then the CO(2) group is transferred by the carboxyltransferase to acetyl-CoA to form malonyl-CoA. In Neisseria meningitidis serogroup B (strain ATCC BAA-335 / MC58), this protein is Acetyl-coenzyme A carboxylase carboxyl transferase subunit alpha.